The primary structure comprises 406 residues: Probable sodium/metabolite cotransporter BASS1, chloroplastic (406 aa).

A chloroplast-targeting transit peptide spans 1–64; that stretch reads MPLLRRPPAA…RHLCGIPSSR (64 aa). 9 consecutive transmembrane segments (helical) span residues 98 to 118, 123 to 143, 152 to 172, 187 to 209, 217 to 237, 252 to 272, 278 to 298, 315 to 335, and 376 to 396; these read VGEV…AVAL, AFLW…MLGM, LKTA…QYSV, PSYY…SNIV, VALS…LTPL, MGLF…GALL, GLVQ…VAVL, LQVV…GYVL, and VPCA…AGIW.

This sequence belongs to the bile acid:sodium symporter (BASS) (TC 2.A.28) family.

Its subcellular location is the membrane. The protein resides in the plastid. It localises to the chloroplast envelope. May function as sodium-coupled metabolite transporter across the chloroplast envelope. The sequence is that of Probable sodium/metabolite cotransporter BASS1, chloroplastic (BASS1) from Oryza sativa subsp. japonica (Rice).